We begin with the raw amino-acid sequence, 640 residues long: Glutamyl-tRNA(Gln) amidotransferase subunit E (640 aa).

Belongs to the GatB/GatE family. GatE subfamily. In terms of assembly, heterodimer of GatD and GatE.

The enzyme catalyses L-glutamyl-tRNA(Gln) + L-glutamine + ATP + H2O = L-glutaminyl-tRNA(Gln) + L-glutamate + ADP + phosphate + H(+). Functionally, allows the formation of correctly charged Gln-tRNA(Gln) through the transamidation of misacylated Glu-tRNA(Gln) in organisms which lack glutaminyl-tRNA synthetase. The reaction takes place in the presence of glutamine and ATP through an activated gamma-phospho-Glu-tRNA(Gln). The GatDE system is specific for glutamate and does not act on aspartate. In Methanopyrus kandleri (strain AV19 / DSM 6324 / JCM 9639 / NBRC 100938), this protein is Glutamyl-tRNA(Gln) amidotransferase subunit E.